A 285-amino-acid chain; its full sequence is Iodotyrosine deiodinase 1 (285 aa).

The chain crosses the membrane as a helical span at residues 1 to 21 (MFLLTPVLVAVVCILVVWVFK). FMN-binding positions include 96-100 (RRSVR) and 124-125 (SG). Positions 126, 153, 157, and 178 each coordinate 3,5-diiodo-L-tyrosine. A126, E153, Y157, and K178 together coordinate 3-iodo-L-tyrosine. Residues 233-235 (TTT) and R275 contribute to the FMN site.

This sequence belongs to the nitroreductase family. Homodimer. It depends on FMN as a cofactor.

The protein localises to the cell membrane. Its subcellular location is the cytoplasmic vesicle membrane. The catalysed reaction is 2 iodide + L-tyrosine + 2 NADP(+) = 3,5-diiodo-L-tyrosine + 2 NADPH + H(+). It catalyses the reaction iodide + L-tyrosine + NADP(+) = 3-iodo-L-tyrosine + NADPH. It carries out the reaction 3-iodo-L-tyrosine + iodide + NADP(+) = 3,5-diiodo-L-tyrosine + NADPH + H(+). The enzyme catalyses L-tyrosine + chloride + NADP(+) = 3-chloro-L-tyrosine + NADPH. The catalysed reaction is bromide + L-tyrosine + NADP(+) = 3-bromo-L-tyrosine + NADPH. Its function is as follows. Catalyzes the dehalogenation of halotyrosines such as 3-bromo-L-tyrosine, 3-chloro-L-tyrosine, 3-iodo-L-tyrosine and 3,5-diiodo-L-tyrosine. During thyroid hormone biosynthesis, facilitates iodide salvage by catalysing the oxidative NADPH-dependent deiodination of the halogenated by-products of thyroid hormone production, monoiodotyrosine (L-MIT) and diiodotyrosine (L-DIT). The scavanged iodide can then reenter the hormone-producing pathways. Acts more efficiently on 3-iodo-L-tyrosine than 3,5-diiodo-L-tyrosine. The chain is Iodotyrosine deiodinase 1 (Iyd) from Mus musculus (Mouse).